The chain runs to 392 residues: Xyloside xylosyltransferase 1 (392 aa).

Over 1–19 (MGLLRGGAACARAMARLGA) the chain is Cytoplasmic. A helical; Signal-anchor for type II membrane protein transmembrane segment spans residues 20–42 (LRSHYCALLLAAALAVCAFYYLG). The Lumenal segment spans residues 43–392 (SGRETFSSAT…GNCNTPIPED (350 aa)). 103-105 (MFT) provides a ligand contact to UDP-alpha-D-xylose. D225 lines the Mn(2+) pocket. Residue L226 coordinates UDP-alpha-D-xylose. A Mn(2+)-binding site is contributed by D227. The interval 262 to 265 (HTFW) is interaction with target proteins. The UDP-alpha-D-xylose site is built by S289, L327, and Q330. A glycoprotein is bound by residues Q330 and W359. 2 disulfides stabilise this stretch: C349–C374 and C356–C385. H382 contributes to the Mn(2+) binding site. An a glycoprotein-binding site is contributed by N384.

The protein belongs to the glycosyltransferase 8 family. In terms of assembly, homodimer. Dimer formation may be essential for the retention in endoplasmic reticulum. Mg(2+) serves as cofactor. The cofactor is Mn(2+).

It is found in the endoplasmic reticulum membrane. The enzyme catalyses 3-O-[alpha-D-xylosyl-(1-&gt;3)-beta-D-glucosyl]-L-seryl-[EGF-like domain protein] + UDP-alpha-D-xylose = 3-O-[alpha-D-xylosyl-(1-&gt;3)-alpha-D-xylosyl-(1-&gt;3)-beta-D-glucosyl]-L-seryl-[EGF-like domain protein] + UDP + H(+). Its function is as follows. Alpha-1,3-xylosyltransferase, which elongates the O-linked xylose-glucose disaccharide attached to EGF-like repeats in the extracellular domain of target proteins by catalyzing the addition of the second xylose. Known targets include Notch proteins and coagulation factors, such as F9. This chain is Xyloside xylosyltransferase 1 (Xxylt1), found in Mus musculus (Mouse).